Reading from the N-terminus, the 399-residue chain is Acetate kinase (399 aa).

Residue N10 coordinates Mg(2+). K17 provides a ligand contact to ATP. R91 lines the substrate pocket. The active-site Proton donor/acceptor is the D150. ATP-binding positions include 210–214 (HLGNG), 285–287 (DFR), and 333–337 (GIGEN). E387 contributes to the Mg(2+) binding site.

The protein belongs to the acetokinase family. In terms of assembly, homodimer. Mg(2+) serves as cofactor. Mn(2+) is required as a cofactor.

It localises to the cytoplasm. It catalyses the reaction acetate + ATP = acetyl phosphate + ADP. Its pathway is metabolic intermediate biosynthesis; acetyl-CoA biosynthesis; acetyl-CoA from acetate: step 1/2. Its function is as follows. Catalyzes the formation of acetyl phosphate from acetate and ATP. Can also catalyze the reverse reaction. This is Acetate kinase from Wigglesworthia glossinidia brevipalpis.